Here is a 156-residue protein sequence, read N- to C-terminus: 6,7-dimethyl-8-ribityllumazine synthase (156 aa).

5-amino-6-(D-ribitylamino)uracil-binding positions include phenylalanine 23, alanine 57 to glutamate 59, and alanine 81 to isoleucine 83. Serine 86–threonine 87 is a (2S)-2-hydroxy-3-oxobutyl phosphate binding site. Histidine 89 serves as the catalytic Proton donor. Phenylalanine 114 serves as a coordination point for 5-amino-6-(D-ribitylamino)uracil. Arginine 128 lines the (2S)-2-hydroxy-3-oxobutyl phosphate pocket.

This sequence belongs to the DMRL synthase family.

The enzyme catalyses (2S)-2-hydroxy-3-oxobutyl phosphate + 5-amino-6-(D-ribitylamino)uracil = 6,7-dimethyl-8-(1-D-ribityl)lumazine + phosphate + 2 H2O + H(+). It functions in the pathway cofactor biosynthesis; riboflavin biosynthesis; riboflavin from 2-hydroxy-3-oxobutyl phosphate and 5-amino-6-(D-ribitylamino)uracil: step 1/2. Functionally, catalyzes the formation of 6,7-dimethyl-8-ribityllumazine by condensation of 5-amino-6-(D-ribitylamino)uracil with 3,4-dihydroxy-2-butanone 4-phosphate. This is the penultimate step in the biosynthesis of riboflavin. The chain is 6,7-dimethyl-8-ribityllumazine synthase from Helicobacter hepaticus (strain ATCC 51449 / 3B1).